Reading from the N-terminus, the 931-residue chain is Valine--tRNA ligase (931 aa).

The 'HIGH' region motif lies at 43–53; the sequence is PNVTGALHIGH. The tract at residues 351–370 is disordered; sequence IPHTDKDGNAHDAEPRTIQT. Positions 353–365 are enriched in basic and acidic residues; that stretch reads HTDKDGNAHDAEP. A 'KMSKS' region motif is present at residues 552–556; that stretch reads KMSKS. Lysine 555 is an ATP binding site. The interval 691 to 717 is disordered; it reads LQGRGLGEGDEAVPAPADGPLSPALSP. Residues 864–930 adopt a coiled-coil conformation; the sequence is VIDIAAERER…DRLSAALARL (67 aa).

Belongs to the class-I aminoacyl-tRNA synthetase family. ValS type 1 subfamily. In terms of assembly, monomer.

The protein resides in the cytoplasm. It carries out the reaction tRNA(Val) + L-valine + ATP = L-valyl-tRNA(Val) + AMP + diphosphate. Its function is as follows. Catalyzes the attachment of valine to tRNA(Val). As ValRS can inadvertently accommodate and process structurally similar amino acids such as threonine, to avoid such errors, it has a 'posttransfer' editing activity that hydrolyzes mischarged Thr-tRNA(Val) in a tRNA-dependent manner. This is Valine--tRNA ligase from Sphingopyxis alaskensis (strain DSM 13593 / LMG 18877 / RB2256) (Sphingomonas alaskensis).